The following is a 161-amino-acid chain: UPF0763 protein Cla_1130 (161 aa).

Belongs to the UPF0763 family.

This chain is UPF0763 protein Cla_1130, found in Campylobacter lari (strain RM2100 / D67 / ATCC BAA-1060).